Reading from the N-terminus, the 489-residue chain is Aklavinone 12-hydroxylase DnrF (489 aa).

FAD is bound by residues 17–18 (LG), Glu-37, Gln-121, and Leu-145. Tyr-224 serves as the catalytic Proton acceptor. Residue Asp-308 coordinates FAD. Residue Gly-317 coordinates aklavinone. The segment at 402 to 428 (VAAEDDDPEPTEDPRRPSGRPGFRAPH) is disordered.

The protein belongs to the PheA/TfdB FAD monooxygenase family. As to quaternary structure, monomer. FAD is required as a cofactor.

It catalyses the reaction aklavinone + NADPH + O2 + H(+) = epsilon-rhodomycinone + NADP(+) + H2O. It functions in the pathway antibiotic biosynthesis; daunorubicin biosynthesis. It participates in antibiotic biosynthesis; carminomycin biosynthesis. Its pathway is antibiotic biosynthesis; rhodomycin biosynthesis. The protein operates within antibiotic biosynthesis; doxorubicin biosynthesis. Its function is as follows. Involved in the biosynthesis of the anthracyclines carminomycin, rhodomycin, daunorubicin (daunomycin) and doxorubicin (adriamycin) which are aromatic polyketide antibiotics that exhibit high cytotoxicity and are widely applied in the chemotherapy of a variety of cancers. Catalyzes the incorporation of a hydroxyl group at position C-11 of aklavinone, resulting in epsilon-rhodomycinone. This chain is Aklavinone 12-hydroxylase DnrF (dnrF), found in Streptomyces peucetius subsp. caesius.